The sequence spans 198 residues: ATP-dependent Clp protease proteolytic subunit 2 (198 aa).

S101 functions as the Nucleophile in the catalytic mechanism. H126 is a catalytic residue.

The protein belongs to the peptidase S14 family. As to quaternary structure, fourteen ClpP subunits assemble into 2 heptameric rings which stack back to back to give a disk-like structure with a central cavity, resembling the structure of eukaryotic proteasomes.

It is found in the cytoplasm. It catalyses the reaction Hydrolysis of proteins to small peptides in the presence of ATP and magnesium. alpha-casein is the usual test substrate. In the absence of ATP, only oligopeptides shorter than five residues are hydrolyzed (such as succinyl-Leu-Tyr-|-NHMec, and Leu-Tyr-Leu-|-Tyr-Trp, in which cleavage of the -Tyr-|-Leu- and -Tyr-|-Trp bonds also occurs).. Cleaves peptides in various proteins in a process that requires ATP hydrolysis. Has a chymotrypsin-like activity. Plays a major role in the degradation of misfolded proteins. The chain is ATP-dependent Clp protease proteolytic subunit 2 from Thermosynechococcus vestitus (strain NIES-2133 / IAM M-273 / BP-1).